The following is a 171-amino-acid chain: ATP synthase subunit b (171 aa).

A helical membrane pass occupies residues 2–22 (VLVKMALGFLILLSPLCAMEL).

The protein belongs to the ATPase B chain family. F-type ATPases have 2 components, F(1) - the catalytic core - and F(0) - the membrane proton channel. F(1) has five subunits: alpha(3), beta(3), gamma(1), delta(1), epsilon(1). F(0) has three main subunits: a(1), b(2) and c(10-14). The alpha and beta chains form an alternating ring which encloses part of the gamma chain. F(1) is attached to F(0) by a central stalk formed by the gamma and epsilon chains, while a peripheral stalk is formed by the delta and b chains.

The protein resides in the cell inner membrane. Functionally, f(1)F(0) ATP synthase produces ATP from ADP in the presence of a proton or sodium gradient. F-type ATPases consist of two structural domains, F(1) containing the extramembraneous catalytic core and F(0) containing the membrane proton channel, linked together by a central stalk and a peripheral stalk. During catalysis, ATP synthesis in the catalytic domain of F(1) is coupled via a rotary mechanism of the central stalk subunits to proton translocation. Component of the F(0) channel, it forms part of the peripheral stalk, linking F(1) to F(0). The chain is ATP synthase subunit b from Helicobacter acinonychis (strain Sheeba).